The sequence spans 106 residues: Large ribosomal subunit protein eL42 (106 aa).

This sequence belongs to the eukaryotic ribosomal protein eL42 family.

The chain is Large ribosomal subunit protein eL42 (RPL44) from Candida tropicalis (Yeast).